A 170-amino-acid chain; its full sequence is NADH-quinone oxidoreductase subunit B (170 aa).

The [4Fe-4S] cluster site is built by Cys46, Cys47, Cys111, and Cys141.

It belongs to the complex I 20 kDa subunit family. In terms of assembly, NDH-1 is composed of 14 different subunits. Subunits NuoB, C, D, E, F, and G constitute the peripheral sector of the complex. [4Fe-4S] cluster serves as cofactor.

The protein localises to the cell membrane. The enzyme catalyses a quinone + NADH + 5 H(+)(in) = a quinol + NAD(+) + 4 H(+)(out). Its function is as follows. NDH-1 shuttles electrons from NADH, via FMN and iron-sulfur (Fe-S) centers, to quinones in the respiratory chain. The immediate electron acceptor for the enzyme in this species is believed to be a menaquinone. Couples the redox reaction to proton translocation (for every two electrons transferred, four hydrogen ions are translocated across the cytoplasmic membrane), and thus conserves the redox energy in a proton gradient. The protein is NADH-quinone oxidoreductase subunit B of Geobacillus thermodenitrificans (strain NG80-2).